The chain runs to 400 residues: Tryptophan synthase beta chain (400 aa).

K95 bears the N6-(pyridoxal phosphate)lysine mark.

It belongs to the TrpB family. As to quaternary structure, tetramer of two alpha and two beta chains. Requires pyridoxal 5'-phosphate as cofactor.

It carries out the reaction (1S,2R)-1-C-(indol-3-yl)glycerol 3-phosphate + L-serine = D-glyceraldehyde 3-phosphate + L-tryptophan + H2O. The protein operates within amino-acid biosynthesis; L-tryptophan biosynthesis; L-tryptophan from chorismate: step 5/5. The beta subunit is responsible for the synthesis of L-tryptophan from indole and L-serine. This is Tryptophan synthase beta chain from Chlorobaculum tepidum (strain ATCC 49652 / DSM 12025 / NBRC 103806 / TLS) (Chlorobium tepidum).